Here is a 349-residue protein sequence, read N- to C-terminus: GDP-mannose:glycolipid 4-beta-D-mannosyltransferase (349 aa).

An N-terminal signal peptide occupies residues 1–14 (MSASASLPVTRAAA).

The protein belongs to the glycosyltransferase 94 family.

Its subcellular location is the cell inner membrane. It carries out the reaction beta-D-GlcA-(1-&gt;2)-alpha-D-Man-(1-&gt;3)-beta-D-Glc-(1-&gt;4)-alpha-D-Glc-di-trans,octa-cis-undecaprenyl diphosphate + GDP-alpha-D-mannose = beta-D-Man-(1-&gt;4)-beta-D-GlcA-(1-&gt;2)-alpha-D-Man-(1-&gt;3)-beta-D-Glc-(1-&gt;4)-alpha-D-Glc-di-trans,octa-cis-undecaprenyl diphosphate + GDP + H(+). Its pathway is glycan biosynthesis; xanthan biosynthesis. Its function is as follows. Nonprocessive beta-mannosyltransferase that catalyzes the transfer of a mannose residue from GDP-mannose to glucuronic acid-beta-1,2-mannose-alpha-1,3-glucose-beta-1,4-glucose-PP-polyisoprenyl to form the lipid-linked pentasaccharide repeating unit of xanthan, Man-GlcA-Man-Glc(2)-PP-Pol. Is involved in the biosynthesis of the exopolysaccharide xanthan. This chain is GDP-mannose:glycolipid 4-beta-D-mannosyltransferase (gumI), found in Xanthomonas campestris pv. campestris (strain ATCC 33913 / DSM 3586 / NCPPB 528 / LMG 568 / P 25).